Here is a 165-residue protein sequence, read N- to C-terminus: NADPH-dependent 7-cyano-7-deazaguanine reductase (165 aa).

C56 functions as the Thioimide intermediate in the catalytic mechanism. D63 functions as the Proton donor in the catalytic mechanism. Residues 78-80 (VES) and 97-98 (HE) each bind substrate.

Belongs to the GTP cyclohydrolase I family. QueF type 1 subfamily.

The protein localises to the cytoplasm. It catalyses the reaction 7-aminomethyl-7-carbaguanine + 2 NADP(+) = 7-cyano-7-deazaguanine + 2 NADPH + 3 H(+). Its pathway is tRNA modification; tRNA-queuosine biosynthesis. Catalyzes the NADPH-dependent reduction of 7-cyano-7-deazaguanine (preQ0) to 7-aminomethyl-7-deazaguanine (preQ1). The protein is NADPH-dependent 7-cyano-7-deazaguanine reductase of Bacillus cytotoxicus (strain DSM 22905 / CIP 110041 / 391-98 / NVH 391-98).